The chain runs to 594 residues: UvrABC system protein C (594 aa).

One can recognise a GIY-YIG domain in the interval 13–99; the sequence is NSSGVYQYFD…IKQLKPKYNI (87 aa). A UVR domain is found at 205 to 240; it reads DRLIKELELKMERLSNNLRFEEALIYRDRIAKIQKI.

This sequence belongs to the UvrC family. As to quaternary structure, interacts with UvrB in an incision complex.

The protein resides in the cytoplasm. The UvrABC repair system catalyzes the recognition and processing of DNA lesions. UvrC both incises the 5' and 3' sides of the lesion. The N-terminal half is responsible for the 3' incision and the C-terminal half is responsible for the 5' incision. This chain is UvrABC system protein C, found in Helicobacter pylori (strain ATCC 700392 / 26695) (Campylobacter pylori).